Reading from the N-terminus, the 616-residue chain is Protein RIK (616 aa).

A compositionally biased stretch (basic and acidic residues) spans 1 to 11 (MTEDRAHKVAD). The disordered stretch occupies residues 1–32 (MTEDRAHKVADEPAASGRQSPERKKRKWDQPA). In terms of domain architecture, KH spans 198–304 (GTTSESISVP…AKVLAENLLD (107 aa)). Composition is skewed to polar residues over residues 432 to 449 (TQAVPVTSTPTSMATKGN), 475 to 484 (TESQNSQQGS), and 491 to 502 (LDSSGNIGSSSI). Disordered stretches follow at residues 432 to 455 (TQAVPVTSTPTSMATKGNSILDAE) and 467 to 616 (LPVS…HTCV). A compositionally biased stretch (pro residues) spans 534–564 (LPPPLKSMLPLPPRSMPPPPPKSMPPPPPKF). Composition is skewed to basic and acidic residues over residues 565 to 575 (PSDEFLSRNEN) and 598 to 610 (SERRPREPKEEKN).

In terms of assembly, interacts with RS2. In terms of tissue distribution, expressed in vegetative tissues. More abundant in apices and young leaf primordia than in fully expanded leaf tissues.

The protein localises to the nucleus. This Zea mays (Maize) protein is Protein RIK.